A 484-amino-acid chain; its full sequence is Aspartyl/glutamyl-tRNA(Asn/Gln) amidotransferase subunit B (484 aa).

This sequence belongs to the GatB/GatE family. GatB subfamily. Heterotrimer of A, B and C subunits.

The catalysed reaction is L-glutamyl-tRNA(Gln) + L-glutamine + ATP + H2O = L-glutaminyl-tRNA(Gln) + L-glutamate + ADP + phosphate + H(+). The enzyme catalyses L-aspartyl-tRNA(Asn) + L-glutamine + ATP + H2O = L-asparaginyl-tRNA(Asn) + L-glutamate + ADP + phosphate + 2 H(+). Allows the formation of correctly charged Asn-tRNA(Asn) or Gln-tRNA(Gln) through the transamidation of misacylated Asp-tRNA(Asn) or Glu-tRNA(Gln) in organisms which lack either or both of asparaginyl-tRNA or glutaminyl-tRNA synthetases. The reaction takes place in the presence of glutamine and ATP through an activated phospho-Asp-tRNA(Asn) or phospho-Glu-tRNA(Gln). This chain is Aspartyl/glutamyl-tRNA(Asn/Gln) amidotransferase subunit B, found in Cupriavidus metallidurans (strain ATCC 43123 / DSM 2839 / NBRC 102507 / CH34) (Ralstonia metallidurans).